A 311-amino-acid chain; its full sequence is Malate dehydrogenase (311 aa).

Residues G7–G13 and D34 contribute to the NAD(+) site. Substrate is bound by residues R81 and R87. NAD(+) is bound by residues N94 and I117 to N119. The substrate site is built by N119 and R153. H177 acts as the Proton acceptor in catalysis. M227 lines the NAD(+) pocket.

It belongs to the LDH/MDH superfamily. MDH type 1 family. As to quaternary structure, homodimer.

The enzyme catalyses (S)-malate + NAD(+) = oxaloacetate + NADH + H(+). Its function is as follows. Catalyzes the reversible oxidation of malate to oxaloacetate. The protein is Malate dehydrogenase of Colwellia psychrerythraea (strain 34H / ATCC BAA-681) (Vibrio psychroerythus).